The chain runs to 399 residues: Acetate kinase (399 aa).

Residue asparagine 8 coordinates Mg(2+). Lysine 15 is a binding site for ATP. Arginine 89 provides a ligand contact to substrate. The active-site Proton donor/acceptor is the aspartate 147. Residues 207–211 (HMGNG), 284–286 (DMR), and 332–336 (GIGEN) contribute to the ATP site. Mg(2+) is bound at residue glutamate 385.

This sequence belongs to the acetokinase family. Homodimer. Mg(2+) serves as cofactor. Mn(2+) is required as a cofactor.

Its subcellular location is the cytoplasm. It catalyses the reaction acetate + ATP = acetyl phosphate + ADP. It functions in the pathway metabolic intermediate biosynthesis; acetyl-CoA biosynthesis; acetyl-CoA from acetate: step 1/2. In terms of biological role, catalyzes the formation of acetyl phosphate from acetate and ATP. Can also catalyze the reverse reaction. The polypeptide is Acetate kinase (Streptococcus mutans serotype c (strain ATCC 700610 / UA159)).